The sequence spans 139 residues: Putative lipoprotein LpqV (139 aa).

The signal sequence occupies residues Met1–Gly25. Cys26 is lipidated: N-palmitoyl cysteine. Cys26 carries the S-diacylglycerol cysteine lipid modification.

Its subcellular location is the cell membrane. The chain is Putative lipoprotein LpqV (lpqV) from Mycobacterium bovis (strain ATCC BAA-935 / AF2122/97).